Consider the following 197-residue polypeptide: Imidazoleglycerol-phosphate dehydratase (197 aa).

Belongs to the imidazoleglycerol-phosphate dehydratase family.

The protein localises to the cytoplasm. The catalysed reaction is D-erythro-1-(imidazol-4-yl)glycerol 3-phosphate = 3-(imidazol-4-yl)-2-oxopropyl phosphate + H2O. It functions in the pathway amino-acid biosynthesis; L-histidine biosynthesis; L-histidine from 5-phospho-alpha-D-ribose 1-diphosphate: step 6/9. This is Imidazoleglycerol-phosphate dehydratase from Chromohalobacter salexigens (strain ATCC BAA-138 / DSM 3043 / CIP 106854 / NCIMB 13768 / 1H11).